The chain runs to 570 residues: Membrane protein insertase YidC (570 aa).

The span at 31 to 60 (QQPVAQTPSVTIDSNGADSSALLNSPNTGE) shows a compositional bias: polar residues. The interval 31-79 (QQPVAQTPSVTIDSNGADSSALLNSPNTGELDTPETASKPATAEDSNIS) is disordered. A run of 5 helical transmembrane segments spans residues 230–250 (PTFS…STPE), 378–398 (WGIA…HLSA), 444–464 (LGGC…YWVL), 487–507 (PYFV…SLNP), and 522–542 (PIIF…YWLV).

The protein belongs to the OXA1/ALB3/YidC family. Type 1 subfamily. Interacts with the Sec translocase complex via SecD. Specifically interacts with transmembrane segments of nascent integral membrane proteins during membrane integration.

The protein resides in the cell inner membrane. Its function is as follows. Required for the insertion and/or proper folding and/or complex formation of integral membrane proteins into the membrane. Involved in integration of membrane proteins that insert both dependently and independently of the Sec translocase complex, as well as at least some lipoproteins. Aids folding of multispanning membrane proteins. The sequence is that of Membrane protein insertase YidC from Hahella chejuensis (strain KCTC 2396).